Reading from the N-terminus, the 960-residue chain is Ran GTPase-activating protein 2 (960 aa).

5 LRR repeats span residues 69–92, 132–156, 162–185, 227–254, and 313–340; these read HLNLEVLDFRGNTLSVLAGKLIAE, GCRLTTLDLSDNAFGAGLSTSLYNF, LYSLENLILNNNGLGLAGKTVGKA, LGTLEEIRLPQNGIRDDGIIALAEAFRM, and RDCLKKVVLSGNNITSDVIDEIGACFNS. The disordered stretch occupies residues 370–408; sequence NIDFGRRGDDELLSSDEEEEQGAEDASMEEDAFNTSRET. Residues 380-401 are compositionally biased toward acidic residues; the sequence is ELLSSDEEEEQGAEDASMEEDA. LRR repeat units lie at residues 475-498, 538-561, 568-595, and 663-685; these read ASSMKALELRGNTLGIAAGNVIAK, GCKIKELDLSDNAFGPIGADALKD, SFSLEVLKLNNNGLGIGGKQIAKSLTEC, and NRNLRYLWLEDNTVLPKGAKALA. The disordered stretch occupies residues 777 to 819; sequence PENVNVGDEDDDLGSLDGDQEEYNSKSSDSEDADLDDDDEDDD. Composition is skewed to acidic residues over residues 783–798 and 806–819; these read GDEDDDLGSLDGDQEE and SEDADLDDDDEDDD.

It localises to the nucleus. Functionally, GTPase system comprising ran-1, ran-2 and ran-3 is essential in nucleocytoplasmic trafficking. Ran-2 is a GTPase activator for the nuclear RAS-related regulatory protein Ran, converting it to the putatively inactive GDP-bound state. Required for correct chromosome alignment and segregation on the metaphase plate. In Caenorhabditis elegans, this protein is Ran GTPase-activating protein 2 (ran-2).